Reading from the N-terminus, the 342-residue chain is MSKAYEQSGVNIHAGYEAVERMSSHVKRTMRKEVIGGLGGFGATFDLSQLNMTAPVLVSGTDGVGTKLKLAIDYGKHDSIGIDAVAMCVNDILTTGAEPLYFLDYIATNKVVPEVIEQIVKGISDACVETNTALIGGETAEMGEMYHEGEYDVAGFAVGAVEKDDYVDGSEVKEGQVVIGLASSGIHSNGYSLVRKLINESGIDLASNFDNRPFIDVFLEPTKLYVKPVLALKKEVSIKAMNHITGGGFYENIPRALPAGYAARIDTTSFPTPKIFDWLQQQGNIDTNEMYNIFNMGIGYTVIVDEKDVSRALKILAEQNVEAYQIGHIVKNESTAIELLGV.

This sequence belongs to the AIR synthase family.

It localises to the cytoplasm. It catalyses the reaction 2-formamido-N(1)-(5-O-phospho-beta-D-ribosyl)acetamidine + ATP = 5-amino-1-(5-phospho-beta-D-ribosyl)imidazole + ADP + phosphate + H(+). It participates in purine metabolism; IMP biosynthesis via de novo pathway; 5-amino-1-(5-phospho-D-ribosyl)imidazole from N(2)-formyl-N(1)-(5-phospho-D-ribosyl)glycinamide: step 2/2. This Staphylococcus aureus (strain USA300) protein is Phosphoribosylformylglycinamidine cyclo-ligase.